The following is a 158-amino-acid chain: Endoribonuclease YbeY (158 aa).

Positions 118, 122, and 128 each coordinate Zn(2+).

The protein belongs to the endoribonuclease YbeY family. It depends on Zn(2+) as a cofactor.

Its subcellular location is the cytoplasm. Its function is as follows. Single strand-specific metallo-endoribonuclease involved in late-stage 70S ribosome quality control and in maturation of the 3' terminus of the 16S rRNA. The chain is Endoribonuclease YbeY from Bartonella henselae (strain ATCC 49882 / DSM 28221 / CCUG 30454 / Houston 1) (Rochalimaea henselae).